We begin with the raw amino-acid sequence, 336 residues long: Nuclear envelope-associated protein 3 (336 aa).

Coiled coils occupy residues 14-87 (LKDL…IRAS) and 128-261 (VLSK…LKKK). Residues 240-261 (KTKELEDQVENQRRIDQELKKK) carry the Bipartite nuclear localization signal motif. Residues 313–330 (LWDKSGFKIVVSMSMLIL) form a helical membrane-spanning segment.

In terms of assembly, forms homomers and heteromers with NEAP1 and NEAP2. Interacts with SUN1 and SUN2.

The protein localises to the nucleus inner membrane. It localises to the nucleus. It is found in the nucleoplasm. This is Nuclear envelope-associated protein 3 from Arabidopsis thaliana (Mouse-ear cress).